The following is a 170-amino-acid chain: Ureidoglycolate lyase (170 aa).

It belongs to the ureidoglycolate lyase family. Homodimer. Requires Ni(2+) as cofactor.

The enzyme catalyses (S)-ureidoglycolate = urea + glyoxylate. Its pathway is nitrogen metabolism; (S)-allantoin degradation. Catalyzes the catabolism of the allantoin degradation intermediate (S)-ureidoglycolate, generating urea and glyoxylate. Involved in the utilization of allantoin as nitrogen source. This is Ureidoglycolate lyase from Stutzerimonas stutzeri (strain A1501) (Pseudomonas stutzeri).